The chain runs to 406 residues: Cysteine desulfurase (406 aa).

Residue K226 is modified to N6-(pyridoxal phosphate)lysine. C364 serves as the catalytic Cysteine persulfide intermediate.

The protein belongs to the class-V pyridoxal-phosphate-dependent aminotransferase family. Csd subfamily. Homodimer. Interacts with SufE and the SufBCD complex composed of SufB, SufC and SufD. The interaction with SufE is required to mediate the direct transfer of the sulfur atom from the S-sulfanylcysteine. Pyridoxal 5'-phosphate is required as a cofactor.

Its subcellular location is the cytoplasm. The enzyme catalyses (sulfur carrier)-H + L-cysteine = (sulfur carrier)-SH + L-alanine. It carries out the reaction L-selenocysteine + AH2 = hydrogenselenide + L-alanine + A + H(+). The protein operates within cofactor biosynthesis; iron-sulfur cluster biosynthesis. In terms of biological role, cysteine desulfurases mobilize the sulfur from L-cysteine to yield L-alanine, an essential step in sulfur metabolism for biosynthesis of a variety of sulfur-containing biomolecules. Component of the suf operon, which is activated and required under specific conditions such as oxidative stress and iron limitation. Acts as a potent selenocysteine lyase in vitro, that mobilizes selenium from L-selenocysteine. Selenocysteine lyase activity is however unsure in vivo. The polypeptide is Cysteine desulfurase (Escherichia coli O157:H7 (strain EC4115 / EHEC)).